The primary structure comprises 155 residues: Large ribosomal subunit protein uL13 (155 aa).

It belongs to the universal ribosomal protein uL13 family. Part of the 50S ribosomal subunit.

Its function is as follows. This protein is one of the early assembly proteins of the 50S ribosomal subunit, although it is not seen to bind rRNA by itself. It is important during the early stages of 50S assembly. This Rickettsia bellii (strain OSU 85-389) protein is Large ribosomal subunit protein uL13.